The sequence spans 412 residues: Pyruvate dehydrogenase E1 component subunit alpha, mitochondrial (412 aa).

Pyruvate contacts are provided by His104, Tyr130, Arg131, Ala169, Gly177, Val179, Asp208, Gly209, Ala210, Asn237, and Tyr239. Residues Tyr130 and Arg131 each contribute to the thiamine diphosphate site. Gly177, Val179, Asp208, Gly209, Ala210, and Asn237 together coordinate thiamine diphosphate. Asp208 contributes to the Mg(2+) binding site. Residues Asn237 and Tyr239 each coordinate Mg(2+). Residue His304 participates in thiamine diphosphate binding.

Tetramer of 2 alpha and 2 beta subunits. Requires thiamine diphosphate as cofactor. Mg(2+) serves as cofactor.

The protein localises to the mitochondrion matrix. The catalysed reaction is N(6)-[(R)-lipoyl]-L-lysyl-[protein] + pyruvate + H(+) = N(6)-[(R)-S(8)-acetyldihydrolipoyl]-L-lysyl-[protein] + CO2. With respect to regulation, E1 activity is regulated by phosphorylation (inactivation) and dephosphorylation (activation) of the alpha subunit. Its function is as follows. The pyruvate dehydrogenase complex catalyzes the overall conversion of pyruvate to acetyl-CoA and CO(2). It contains multiple copies of three enzymatic components: pyruvate dehydrogenase (E1), dihydrolipoamide acetyltransferase (E2) and lipoamide dehydrogenase (E3). This chain is Pyruvate dehydrogenase E1 component subunit alpha, mitochondrial (PDA1), found in Kluyveromyces lactis (strain ATCC 8585 / CBS 2359 / DSM 70799 / NBRC 1267 / NRRL Y-1140 / WM37) (Yeast).